Here is a 431-residue protein sequence, read N- to C-terminus: 3-phosphoshikimate 1-carboxyvinyltransferase (431 aa).

3-phosphoshikimate contacts are provided by Lys26, Ser27, and Arg31. Residue Lys26 participates in phosphoenolpyruvate binding. Phosphoenolpyruvate-binding residues include Gly100 and Arg129. Residues Ser175, Ser176, Gln177, Asp308, and Gln335 each coordinate 3-phosphoshikimate. Gln177 is a phosphoenolpyruvate binding site. Asp308 functions as the Proton acceptor in the catalytic mechanism. 3 residues coordinate phosphoenolpyruvate: Arg339, Arg381, and Lys412.

The protein belongs to the EPSP synthase family. In terms of assembly, monomer.

The protein localises to the cytoplasm. It carries out the reaction 3-phosphoshikimate + phosphoenolpyruvate = 5-O-(1-carboxyvinyl)-3-phosphoshikimate + phosphate. It functions in the pathway metabolic intermediate biosynthesis; chorismate biosynthesis; chorismate from D-erythrose 4-phosphate and phosphoenolpyruvate: step 6/7. Catalyzes the transfer of the enolpyruvyl moiety of phosphoenolpyruvate (PEP) to the 5-hydroxyl of shikimate-3-phosphate (S3P) to produce enolpyruvyl shikimate-3-phosphate and inorganic phosphate. In Opitutus terrae (strain DSM 11246 / JCM 15787 / PB90-1), this protein is 3-phosphoshikimate 1-carboxyvinyltransferase.